The primary structure comprises 510 residues: Pyruvate kinase, cytosolic isozyme (510 aa).

Arg50 lines the substrate pocket. Asn52, Ser54, Asp84, and Thr85 together coordinate K(+). An ATP-binding site is contributed by 52–55 (NFSH). Residues Arg91 and Lys176 each coordinate ATP. Glu242 is a Mg(2+) binding site. 3 residues coordinate substrate: Gly265, Asp266, and Thr298. Residue Asp266 coordinates Mg(2+).

This sequence belongs to the pyruvate kinase family. As to quaternary structure, homotetramer. It depends on Mg(2+) as a cofactor. The cofactor is K(+).

The protein resides in the cytoplasm. It catalyses the reaction pyruvate + ATP = phosphoenolpyruvate + ADP + H(+). Its pathway is carbohydrate degradation; glycolysis; pyruvate from D-glyceraldehyde 3-phosphate: step 5/5. The chain is Pyruvate kinase, cytosolic isozyme from Solanum tuberosum (Potato).